We begin with the raw amino-acid sequence, 487 residues long: Beta-barrel assembly-enhancing protease (487 aa).

Positions 1–27 (MFRQLKKNLVATLIAAMTIGQVAPAFA) are cleaved as a signal peptide. H136 contributes to the Zn(2+) binding site. Residue E137 is part of the active site. H140 and E201 together coordinate Zn(2+). D205 (proton donor) is an active-site residue. 4 TPR repeats span residues 309–342 (RAAQ…EPGN), 344–376 (WYLD…RTNP), 377–409 (VLQL…NKDD), and 427–460 (DQEL…VKLG).

The protein belongs to the peptidase M48 family. BepA subfamily. It depends on Zn(2+) as a cofactor.

The protein localises to the periplasm. In terms of biological role, functions both as a chaperone and a metalloprotease. Maintains the integrity of the outer membrane by promoting either the assembly or the elimination of outer membrane proteins, depending on their folding state. The sequence is that of Beta-barrel assembly-enhancing protease from Escherichia coli O157:H7.